A 445-amino-acid chain; its full sequence is Probable cytosol aminopeptidase (445 aa).

Residues Lys217 and Asp222 each contribute to the Mn(2+) site. Lys229 is an active-site residue. Residues Asp240, Asp299, and Glu301 each coordinate Mn(2+). Residue Arg303 is part of the active site.

This sequence belongs to the peptidase M17 family. It depends on Mn(2+) as a cofactor.

Its subcellular location is the cytoplasm. It carries out the reaction Release of an N-terminal amino acid, Xaa-|-Yaa-, in which Xaa is preferably Leu, but may be other amino acids including Pro although not Arg or Lys, and Yaa may be Pro. Amino acid amides and methyl esters are also readily hydrolyzed, but rates on arylamides are exceedingly low.. The catalysed reaction is Release of an N-terminal amino acid, preferentially leucine, but not glutamic or aspartic acids.. Presumably involved in the processing and regular turnover of intracellular proteins. Catalyzes the removal of unsubstituted N-terminal amino acids from various peptides. The polypeptide is Probable cytosol aminopeptidase (pepA) (Mycoplasma pneumoniae (strain ATCC 29342 / M129 / Subtype 1) (Mycoplasmoides pneumoniae)).